A 376-amino-acid polypeptide reads, in one-letter code: MAKRDYYEVLGVKKDADEREIKKAYKRLAVKYHPDRNQDENDTGENFKEVKEAYEILTDPQKRAAYDQYGHAAFEQGGMGGGGFGGGGADFTDIFGDVFGDIFGGGRRQRASRGSDLRYNMDLTLEEAVRGVTKEIRIPTLNECDVCHGSGAKPGSSPVTCSTCRGAGQVHMRQGFFTVQQACPTCHGSGQIIKDPCNKCHGHGRVEKSKTLSVKIPAGVDTGDRIRLSGEGEAGEHGAPAGDLYVQVQVKAHPIFEREGNNLYCEVPINFAMAALGGEIEVPTLDGRVKLKVPAETQTGKLFRMRGKGVKSVRGGSQGDLLCRVVVETPVHLSEKQKQLLRELEESFVGAAGEKNSPRSKSFLDGVKKFFDDLTR.

One can recognise a J domain in the interval 5-70; sequence DYYEVLGVKK…QKRAAYDQYG (66 aa). The CR-type zinc finger occupies 131–209; that stretch reads GVTKEIRIPT…CHGHGRVEKS (79 aa). The Zn(2+) site is built by C144, C147, C161, C164, C183, C186, C197, and C200. CXXCXGXG motif repeat units follow at residues 144-151, 161-168, 183-190, and 197-204; these read CDVCHGSG, CSTCRGAG, CPTCHGSG, and CNKCHGHG.

The protein belongs to the DnaJ family. In terms of assembly, homodimer. Requires Zn(2+) as cofactor.

Its subcellular location is the cytoplasm. In terms of biological role, participates actively in the response to hyperosmotic and heat shock by preventing the aggregation of stress-denatured proteins and by disaggregating proteins, also in an autonomous, DnaK-independent fashion. Unfolded proteins bind initially to DnaJ; upon interaction with the DnaJ-bound protein, DnaK hydrolyzes its bound ATP, resulting in the formation of a stable complex. GrpE releases ADP from DnaK; ATP binding to DnaK triggers the release of the substrate protein, thus completing the reaction cycle. Several rounds of ATP-dependent interactions between DnaJ, DnaK and GrpE are required for fully efficient folding. Also involved, together with DnaK and GrpE, in the DNA replication of plasmids through activation of initiation proteins. The protein is Chaperone protein DnaJ of Yersinia enterocolitica serotype O:8 / biotype 1B (strain NCTC 13174 / 8081).